The primary structure comprises 160 residues: Monooxygenase AacuO (160 aa).

The protein belongs to the avfA family.

The protein operates within secondary metabolite biosynthesis. In terms of biological role, monooxygenase; part of the gene cluster that mediates the biosynthesis of the tetrahydroxanthone dimer secalonic acid D. The pathway begins with the synthesis of atrochrysone thioester by the polyketide synthase AacuL. The atrochrysone carboxyl ACP thioesterase AacuM then breaks the thioester bond and releases the atrochrysone carboxylic acid from AacuL. Atrochrysone carboxylic acid is decarboxylated by the decarboxylase AacuI, and oxidized by the anthrone oxygenase AacuG to yield emodin. Emodin is then reduced to emodin hydroquinone by a yet unidentified oxidoreductase. A-ring reduction by the short chain dehydrogenase AacuN, dehydration by the scytalone dehydratase-like protein AacuK and probable spontaneous re-oxidation, results in overall deoxygenation to chrysophanol. Baeyer-Villiger oxidation by the Baeyer-Villiger monooxygenase (BVMO) AacuH then yields monodictyphenone. Monodictyphenone is transformed into compounds with the tetrahydroxanthone skeleton via methylesterification by the methyltransferase AacuQ, followed by the action of the flavin-dependent monooxygenase AacuC, the isomerase AacuP, and the short chain dehydrogenase/reductase AacuF or AacuD. AacuF and AacuD should accept the same compound as a substrate but perform the ketoreduction with a different stereoselectivity, thus yielding blennolides B and A, respectively. In the final step of the biosynthesis, the cytochrome P450 monooxygenase AacuE accepts blennolide B and/or blennolide A to conduct the dimerization reaction to furnish the tetrahydroxanthone dimers, secalonic acids D, B, and F. In Aspergillus aculeatus (strain ATCC 16872 / CBS 172.66 / WB 5094), this protein is Monooxygenase AacuO.